Here is an 863-residue protein sequence, read N- to C-terminus: Receptor-like protein 9DC3 (863 aa).

The N-terminal stretch at 1–21 is a signal peptide; the sequence is MGCVKLVFFMLYVFLFQLVSS. The Extracellular segment spans residues 22–812; that stretch reads SSLPHLCPED…EEDSPMISWQ (791 aa). The tract at residues 24–90 is N-cap; it reads LPHLCPEDQA…GVHCDETTGQ (67 aa). N-linked (GlcNAc...) asparagine glycosylation is found at Asn-71 and Asn-108. The LRR 1; degenerate repeat unit spans residues 91-114; the sequence is VIALDLRCSQLQGKFHSNSSLFQL. LRR repeat units follow at residues 115–138 and 140–163; these read SNLK…KFGE and SDLT…ISHL. Residues 164-190 form an LRR 4; degenerate repeat; it reads SKLHVLLIGDQYGLSIVPHNFEPLLKN. N-linked (GlcNAc...) asparagine glycosylation is found at Asn-190, Asn-203, and Asn-211. LRR repeat units lie at residues 191–213, 214–237, 240–262, 264–286, 287–311, and 312–336; these read LTQL…SNFS, SHLT…VFHL, LEFL…KWNS, ASLM…SFSH, LTSL…LWNL, and TNIE…IFEK. An N-linked (GlcNAc...) asparagine glycan is attached at Asn-261. 2 N-linked (GlcNAc...) asparagine glycosylation sites follow: Asn-299 and Asn-310. Residues 337-357 form an LRR 11; degenerate repeat; it reads LKKLSLFRNDNLDGGLEFLSF. 15 LRR repeats span residues 358–382, 383–406, 408–428, 429–452, 454–476, 477–500, 502–524, 525–549, 551–572, 573–597, 599–623, 667–690, 691–714, 715–739, and 741–759; these read NTQL…ISGL, QNLE…IFSL, SLVE…EFKS, KTLS…LLNQ, NLQL…ICNL, KTLI…VVER, EYLS…TFSV, GNIL…LINC, YLAL…WLGH, LSQL…GNTN, FTRL…ILGN, LDSN…IIGD, LVGL…SFQN, LSVL…LASL, and FLEV…IPKG. 3 N-linked (GlcNAc...) asparagine glycosylation sites follow: Asn-378, Asn-396, and Asn-416. The N-linked (GlcNAc...) asparagine glycan is linked to Asn-464. N-linked (GlcNAc...) asparagine glycosylation is present at Asn-519. Residue Asn-563 is glycosylated (N-linked (GlcNAc...) asparagine). N-linked (GlcNAc...) asparagine glycosylation is found at Asn-674, Asn-698, and Asn-714. Residues Asn-746 and Asn-767 are each glycosylated (N-linked (GlcNAc...) asparagine). The interval 760–812 is C-cap/acidic domain; the sequence is KQFDSFGNTSYQGNDGLCGFPLSKLCGGDDQVTTPAELDQEEEEEDSPMISWQ. Residues 813–833 traverse the membrane as a helical segment; it reads GVLVGYGCGLVIGLSVIYIMW. The Cytoplasmic segment spans residues 834–863; it reads STQYPAWFSRMHLKLEQIVTTRMKKHKKRY.

The protein belongs to the RLP family.

The protein resides in the cell membrane. Its function is as follows. Involved in plant defense. Confers resistance to the fungal pathogen C.fulvum through recognition of the AVR9 elicitor protein. The sequence is that of Receptor-like protein 9DC3 from Solanum pimpinellifolium (Currant tomato).